A 296-amino-acid chain; its full sequence is Ribosomal protein L11 methyltransferase (296 aa).

Residues threonine 145, glycine 166, aspartate 188, and asparagine 230 each contribute to the S-adenosyl-L-methionine site.

It belongs to the methyltransferase superfamily. PrmA family.

It is found in the cytoplasm. It catalyses the reaction L-lysyl-[protein] + 3 S-adenosyl-L-methionine = N(6),N(6),N(6)-trimethyl-L-lysyl-[protein] + 3 S-adenosyl-L-homocysteine + 3 H(+). Methylates ribosomal protein L11. The polypeptide is Ribosomal protein L11 methyltransferase (Histophilus somni (strain 2336) (Haemophilus somnus)).